The following is a 273-amino-acid chain: Trypsin-6 (273 aa).

The first 22 residues, 1–22 (MLSKFTAILLAVHIALFACALT), serve as a signal peptide directing secretion. Positions 23-46 (QAEKRHKLTRPAFHPNAPYLAGKR) are cleaved as a propeptide — activation peptide. Positions 47–272 (IVGGFVIDIS…VRDWIRETSG (226 aa)) constitute a Peptidase S1 domain. A disulfide bond links cysteine 72 and cysteine 88. Residues histidine 87 and aspartate 132 each act as charge relay system in the active site. Intrachain disulfides connect cysteine 197-cysteine 213 and cysteine 224-cysteine 248. Serine 228 (charge relay system) is an active-site residue.

This sequence belongs to the peptidase S1 family. In terms of tissue distribution, expressed in the midgut. Expression levels drop a few hours after blood feeding and pick up again 28 hours later.

It is found in the secreted. The catalysed reaction is Preferential cleavage: Arg-|-Xaa, Lys-|-Xaa.. Constitutive trypsin that is expressed 2 days after emergence, coinciding with host seeking behavior of the female. The protein is Trypsin-6 (TRYP6) of Anopheles gambiae (African malaria mosquito).